The chain runs to 259 residues: Oxidase ustYb (259 aa).

Residues 36-56 (IIYTSLAFVGFIEILFFGIFF) form a helical membrane-spanning segment. N-linked (GlcNAc...) asparagine glycosylation is found at asparagine 102 and asparagine 122. 2 short sequence motifs (HXXHC) span residues 147-151 (HQLHC) and 197-201 (HVDHC).

This sequence belongs to the ustYa family.

It localises to the membrane. The protein operates within mycotoxin biosynthesis. Its function is as follows. Oxidase; part of the gene cluster that mediates the biosynthesis of the secondary metabolite ustiloxin B, an antimitotic tetrapeptide. First, ustA is processed by the subtilisin-like endoprotease Kex2 that is outside the ustiloxin B gene cluster, at the C-terminal side of Arg-Lys, after transfer to Golgi apparatus through the endoplasmic reticulum (ER). Cleavage by KEX2 generates 16 peptides YAIG-I to YAIG-XVI. To process the precursor peptide further, at least two peptidases are necessary to cleave the N-terminal and C-terminal sides of the Tyr-Ala-Ile-Gly core peptide which serves as backbone for the synthesis of ustiloxin B, through cyclization and modification of the tyrosine with a non-protein coding amino acid, norvaline. One of the two peptidases must be the serine peptidase ustP; and the other pepdidase is probably ustH. Macrocyclization of the core peptide derived from ustA requires the tyrosinase ustQ, as well as the homologous oxidases ustYa and ustYb, and leads to the production of the first cyclization product N-desmethylustiloxin F. For the formation of N-desmethylustiloxin F, three oxidation steps are required, hydroxylation at the benzylic position, hydroxylation at either the aromatic ring of Tyr or beta-position of Ile, and oxidative cyclization. UstQ may catalyze the oxidation of a phenol moiety, whereas the ustYa and ustYb are most likely responsible for the remaining two-step oxidations. N-desmethylustiloxin F is then methylated by ustM to yield ustiloxin F which in turn substrate of the cytochrome P450 monooxygenase ustC which catalyzes the formation of S-deoxyustiloxin H. The flavoprotein monooxygenases ustF1 and ustF2 then participate in the modification of the side chain of S-deoxyustiloxin H, leading to the synthesis of an oxime intermediate, via ustiloxin H. Finally, carboxylative dehydration performed by the cysteine desulfurase-like protein ustD yields ustiloxin B. The sequence is that of Oxidase ustYb from Aspergillus flavus (strain ATCC 200026 / FGSC A1120 / IAM 13836 / NRRL 3357 / JCM 12722 / SRRC 167).